A 220-amino-acid polypeptide reads, in one-letter code: Large ribosomal subunit protein bL9 (220 aa).

Low complexity predominate over residues 167–184; sequence AAAEVEQAEDVAAAEQQD. The disordered stretch occupies residues 167 to 220; it reads AAAEVEQAEDVAAAEQQDSSPVDDHADDADGATGGEGRDEGAGDASDGEEMPST.

This sequence belongs to the bacterial ribosomal protein bL9 family.

Binds to the 23S rRNA. The protein is Large ribosomal subunit protein bL9 of Anaplasma marginale (strain St. Maries).